We begin with the raw amino-acid sequence, 359 residues long: Aminomethyltransferase (359 aa).

This sequence belongs to the GcvT family. The glycine cleavage system is composed of four proteins: P, T, L and H.

The enzyme catalyses N(6)-[(R)-S(8)-aminomethyldihydrolipoyl]-L-lysyl-[protein] + (6S)-5,6,7,8-tetrahydrofolate = N(6)-[(R)-dihydrolipoyl]-L-lysyl-[protein] + (6R)-5,10-methylene-5,6,7,8-tetrahydrofolate + NH4(+). Functionally, the glycine cleavage system catalyzes the degradation of glycine. In Idiomarina loihiensis (strain ATCC BAA-735 / DSM 15497 / L2-TR), this protein is Aminomethyltransferase.